A 389-amino-acid polypeptide reads, in one-letter code: Globin-like protein 6 (389 aa).

The span at 1–15 shows a compositional bias: polar residues; it reads MGNQSTKSTHGTTRV. 3 disordered regions span residues 1–38, 96–123, and 143–185; these read MGNQ…RSAS, RTSK…SVDS, and TVSS…SSNP. A compositionally biased stretch (basic residues) spans 16–25; sequence SHSKSAHHNS. The Globin domain occupies 196–347; it reads HLTQPQILFV…VTEQLKEGFQ (152 aa). 2 residues coordinate heme b: His254 and His286. The interval 367-389 is disordered; sequence SSFEISTKTKQSDMKRFHTLDNM. Positions 376 to 389 are enriched in basic and acidic residues; sequence KQSDMKRFHTLDNM.

The protein belongs to the globin family. In terms of tissue distribution, expressed in the head and tail neurons and nerve cord.

Functionally, may play a role as physiological sensor for oxygen via redox signaling and/or electron transport. The protein is Globin-like protein 6 of Caenorhabditis elegans.